Consider the following 193-residue polypeptide: Peptidyl-tRNA hydrolase (193 aa).

Residue Y17 coordinates tRNA. Residue H22 is the Proton acceptor of the active site. 3 residues coordinate tRNA: Y68, N70, and N116.

It belongs to the PTH family. Monomer.

The protein localises to the cytoplasm. It catalyses the reaction an N-acyl-L-alpha-aminoacyl-tRNA + H2O = an N-acyl-L-amino acid + a tRNA + H(+). Its function is as follows. Hydrolyzes ribosome-free peptidyl-tRNAs (with 1 or more amino acids incorporated), which drop off the ribosome during protein synthesis, or as a result of ribosome stalling. Functionally, catalyzes the release of premature peptidyl moieties from peptidyl-tRNA molecules trapped in stalled 50S ribosomal subunits, and thus maintains levels of free tRNAs and 50S ribosomes. This chain is Peptidyl-tRNA hydrolase, found in Chromobacterium violaceum (strain ATCC 12472 / DSM 30191 / JCM 1249 / CCUG 213 / NBRC 12614 / NCIMB 9131 / NCTC 9757 / MK).